Consider the following 228-residue polypeptide: Transcription termination/antitermination protein NusG (228 aa).

It belongs to the NusG family.

Its function is as follows. Participates in transcription elongation, termination and antitermination. This is Transcription termination/antitermination protein NusG from Mycobacterium leprae (strain TN).